Here is a 120-residue protein sequence, read N- to C-terminus: UPF0231 protein YacL (120 aa).

The protein belongs to the UPF0231 family.

This Salmonella heidelberg (strain SL476) protein is UPF0231 protein YacL.